The primary structure comprises 476 residues: Ovarian-specific serine/threonine-protein kinase Lok (476 aa).

The 61-residue stretch at 69 to 129 (FTAGRGEAND…NGTFVNNEKI (61 aa)) folds into the FHA domain. Residues 174 to 441 (YYVNRKLGSG…IDDVLQSSWL (268 aa)) enclose the Protein kinase domain. Residues 180–188 (LGSGAYGLV) and lysine 203 contribute to the ATP site. The active-site Proton acceptor is the aspartate 303.

Belongs to the protein kinase superfamily. CAMK Ser/Thr protein kinase family. CDS1 subfamily. In terms of tissue distribution, in stage 3 embryos, both isoforms are expressed in both somatic and pole cell nuclei. Expression in pole cell nuclei is sustained until stage 9 and weakly expressed after pole cell invagination into the abdominal cavity.

The protein resides in the nucleus speckle. The enzyme catalyses L-seryl-[protein] + ATP = O-phospho-L-seryl-[protein] + ADP + H(+). It carries out the reaction L-threonyl-[protein] + ATP = O-phospho-L-threonyl-[protein] + ADP + H(+). In terms of biological role, may have a role in germline establishment. In Drosophila melanogaster (Fruit fly), this protein is Ovarian-specific serine/threonine-protein kinase Lok (lok).